The following is an 876-amino-acid chain: DNA polymerase I (876 aa).

One can recognise a 5'-3' exonuclease domain in the interval 1–310 (MKNKLVLIDG…FAIADSVTDE (310 aa)). The subtilisin large fragment stretch occupies residues 289 to 876 (TDEGEKPLAG…HYGPTWYDAK (588 aa)). The segment at 469-876 (EQDRLLTELE…HYGPTWYDAK (408 aa)) is polymerase.

This sequence belongs to the DNA polymerase type-A family. Single-chain monomer with multiple functions.

It carries out the reaction DNA(n) + a 2'-deoxyribonucleoside 5'-triphosphate = DNA(n+1) + diphosphate. Functionally, in addition to polymerase activity, the recombinant enzyme has strand displacement and 5'-3' exonuclease activity, but lacks proofreading 3'-5' exonuclease activity. In Geobacillus stearothermophilus (Bacillus stearothermophilus), this protein is DNA polymerase I (polA).